The following is a 79-amino-acid chain: Eumenine mastoparan-OD (79 aa).

A signal peptide spans 1–24; it reads MKQTIVIVLLAAVAMMACLQMVAA. 5 AXPX repeats span residues 24–27, 30–33, 44–47, 52–55, and 58–61; these read AEPL, AAPA, ASPI, ANPE, and ASPE. A propeptide spanning residues 25–62 is cleaved from the precursor; sequence EPLPEAAPAPSPLAEAEALASPIAEALANPEALASPEA. Leu76 is modified (leucine amide).

In terms of tissue distribution, expressed by the venom gland.

It is found in the secreted. The protein resides in the target cell membrane. Its function is as follows. Antimicrobial peptide with strong activity against the fungi C.albicans (MIC=6 uM) and B.cinerea (MIC=10 uM), and weaker activity against the Gram-negative bacterium E.coli (MIC=97 uM) and Gram-positive bacterium S.aureus (MIC=97 uM). Shows cytolytic activity against insect cell lines. Has potent hemolytic activity against ovine erythrocytes (80% at 50 uM), but has no hemolytic activity against human erythrocytes. In vivo, peptide injection in the vicinity of the head and thorax of lepidopteran larvae induces feeding disorder that lasts one or two days before recovering. The sequence is that of Eumenine mastoparan-OD from Orancistrocerus drewseni (Solitary wasp).